The sequence spans 287 residues: Ribonuclease Z (287 aa).

Residues histidine 64, histidine 66, aspartate 68, histidine 69, histidine 124, aspartate 191, and histidine 250 each coordinate Zn(2+). Aspartate 68 serves as the catalytic Proton acceptor.

This sequence belongs to the RNase Z family. Homodimer. The cofactor is Zn(2+).

The enzyme catalyses Endonucleolytic cleavage of RNA, removing extra 3' nucleotides from tRNA precursor, generating 3' termini of tRNAs. A 3'-hydroxy group is left at the tRNA terminus and a 5'-phosphoryl group is left at the trailer molecule.. Functionally, zinc phosphodiesterase, which displays some tRNA 3'-processing endonuclease activity. Probably involved in tRNA maturation, by removing a 3'-trailer from precursor tRNA. This Pyrobaculum neutrophilum (strain DSM 2338 / JCM 9278 / NBRC 100436 / V24Sta) (Thermoproteus neutrophilus) protein is Ribonuclease Z.